We begin with the raw amino-acid sequence, 160 residues long: Large ribosomal subunit protein eL21B (160 aa).

Residues 114-140 (AKRKEAKAQGKTVQLRRQPAPPATAHF) are disordered.

The protein belongs to the eukaryotic ribosomal protein eL21 family. As to quaternary structure, component of the large ribosomal subunit (LSU). Mature yeast ribosomes consist of a small (40S) and a large (60S) subunit. The 40S small subunit contains 1 molecule of ribosomal RNA (18S rRNA) and at least 33 different proteins. The large 60S subunit contains 3 rRNA molecules (25S, 5.8S and 5S rRNA) and at least 46 different proteins.

Its subcellular location is the cytoplasm. Its function is as follows. Component of the ribosome, a large ribonucleoprotein complex responsible for the synthesis of proteins in the cell. The small ribosomal subunit (SSU) binds messenger RNAs (mRNAs) and translates the encoded message by selecting cognate aminoacyl-transfer RNA (tRNA) molecules. The large subunit (LSU) contains the ribosomal catalytic site termed the peptidyl transferase center (PTC), which catalyzes the formation of peptide bonds, thereby polymerizing the amino acids delivered by tRNAs into a polypeptide chain. The nascent polypeptides leave the ribosome through a tunnel in the LSU and interact with protein factors that function in enzymatic processing, targeting, and the membrane insertion of nascent chains at the exit of the ribosomal tunnel. The protein is Large ribosomal subunit protein eL21B (rpl2102) of Schizosaccharomyces pombe (strain 972 / ATCC 24843) (Fission yeast).